The primary structure comprises 442 residues: MALTFQEILDRIRIIDRDVTELNRLKSRLPADRPYSSSLQISFDKQINELLNERVGLMELEVLDPPSWILGVPTTGISQETPVPLKGLFPSGDLSKEKPDDQDVINFLRELPKTEIHLHLEACVNKDTMKRLMAKNGINVTDEEFEAKFNFKDLNSFIQVFFFIQSLVKEPSDFSFFIESLAEYMRANNILYTEVFFAPSKFIQNGLDFEEMIDFLVNRIREEKENDGIVIRLLVDVSRSFGPENAMKNLDRVLKLRHPEVIGIGLGGAELMGPARDYQGVFQKAREAGLRVVAHSGEDDGPWAIWEAVELLKAERIGHGTSAIQDPELVKYLRENHIPIEICVTSNVFTGKYVRKEQNHPVRYYYDQGLPLSINTDDPEIFNVNLTYEYYKLWRFLDFSLDEIVDLIRQGVFASFHPNKESLWAEMEKNIHLVKTRYGLKR.

This sequence belongs to the metallo-dependent hydrolases superfamily. Adenosine and AMP deaminases family. Requires Zn(2+) as cofactor.

The catalysed reaction is 3',5'-cyclic AMP + H2O + H(+) = 3',5'-cyclic IMP + NH4(+). Its function is as follows. Deaminates cAMP into cIMP, thereby repressing cAMP dependent metabolism or genes. The sequence is that of Cyclic adenylate deaminase (add) from Leptospira interrogans serogroup Icterohaemorrhagiae serovar copenhageni (strain Fiocruz L1-130).